A 141-amino-acid polypeptide reads, in one-letter code: Large ribosomal subunit protein mL42 (141 aa).

The N-terminal 31 residues, 1–31 (MTAAVKWAVSHRTIWRHLFPIQNGAISSACH), are a transit peptide targeting the mitochondrion.

This sequence belongs to the mitochondrion-specific ribosomal protein mL42 family. As to quaternary structure, component of the mitochondrial ribosome large subunit (39S) which comprises a 16S rRNA and about 50 distinct proteins. Component of the mitochondrial ribosome small subunit (28S) which comprises a 12S rRNA and about 30 distinct proteins.

The protein localises to the mitochondrion. The polypeptide is Large ribosomal subunit protein mL42 (Mrpl42) (Rattus norvegicus (Rat)).